Consider the following 197-residue polypeptide: Rac-like GTP-binding protein ARAC1 (197 aa).

13 to 20 is a GTP binding site; sequence GDGAVGKT. The Effector region signature appears at 35–43; that stretch reads YVPTVFDNF. GTP contacts are provided by residues 60–64 and 118–121; these read DTAGQ and TKLD. Cysteine methyl ester is present on Cys194. Cys194 carries the S-geranylgeranyl cysteine lipid modification. A propeptide spans 195–197 (removed in mature form); the sequence is SIL.

The protein belongs to the small GTPase superfamily. Rho family. In terms of assembly, interacts with SPK1. Ubiquitous.

The protein resides in the cytoplasm. It is found in the membrane. Functionally, inactive GDP-bound Rho GTPases reside in the cytosol, are found in a complex with Rho GDP-dissociation inhibitors (Rho GDIs), and are released from the GDI protein in order to translocate to membranes upon activation. The chain is Rac-like GTP-binding protein ARAC1 (ARAC1) from Arabidopsis thaliana (Mouse-ear cress).